Reading from the N-terminus, the 500-residue chain is NAD(P)H-quinone oxidoreductase chain 4, chloroplastic (500 aa).

A run of 14 helical transmembrane segments spans residues 4-24 (FPWL…IFFL), 37-57 (ICIC…HFQL), 87-107 (IGPI…AWPV), 113-130 (LFHF…GSFS), 134-154 (LLLF…LLSM), 167-187 (FILY…GIGL), 207-227 (IALE…KSPI), 242-262 (HYST…YGLV), 272-292 (AHSL…IYAA), 305-325 (IAYS…SITD), 330-350 (GAIL…FLAG), 386-406 (LALP…GIIT), 411-431 (FLMA…LTPI), and 462-482 (LFVS…PDFL).

It belongs to the complex I subunit 4 family.

Its subcellular location is the plastid. The protein localises to the chloroplast thylakoid membrane. It carries out the reaction a plastoquinone + NADH + (n+1) H(+)(in) = a plastoquinol + NAD(+) + n H(+)(out). It catalyses the reaction a plastoquinone + NADPH + (n+1) H(+)(in) = a plastoquinol + NADP(+) + n H(+)(out). This Carica papaya (Papaya) protein is NAD(P)H-quinone oxidoreductase chain 4, chloroplastic.